A 901-amino-acid chain; its full sequence is HTH-type transcriptional regulator MalT (901 aa).

Position 39 to 46 (39 to 46 (SPAGYGKT)) interacts with ATP. Residues 829–894 (ELIRTSPLTQ…AAVQHAQKLL (66 aa)) form the HTH luxR-type domain. The segment at residues 853-872 (NEQIAGELEVAATTIKTHIR) is a DNA-binding region (H-T-H motif).

Belongs to the MalT family. Monomer in solution. Oligomerizes to an active state in the presence of the positive effectors ATP and maltotriose.

Its activity is regulated as follows. Activated by ATP and maltotriose, which are both required for DNA binding. Positively regulates the transcription of the maltose regulon whose gene products are responsible for uptake and catabolism of malto-oligosaccharides. Specifically binds to the promoter region of its target genes, recognizing a short DNA motif called the MalT box. This is HTH-type transcriptional regulator MalT from Escherichia coli O7:K1 (strain IAI39 / ExPEC).